Consider the following 438-residue polypeptide: Probable imidazolonepropionase (438 aa).

4-imidazolone-5-propanoate is bound by residues tyrosine 159 and histidine 192. Tyrosine 159 lines the N-formimidoyl-L-glutamate pocket. Histidine 260 contributes to the Fe(3+) binding site. Histidine 260 lines the Zn(2+) pocket. 4-imidazolone-5-propanoate is bound at residue glutamate 263. Aspartate 334 contacts Fe(3+). Aspartate 334 is a binding site for Zn(2+). Asparagine 336 lines the N-formimidoyl-L-glutamate pocket.

This sequence belongs to the metallo-dependent hydrolases superfamily. HutI family. The cofactor is Zn(2+). Fe(3+) serves as cofactor.

The catalysed reaction is 4-imidazolone-5-propanoate + H2O = N-formimidoyl-L-glutamate. Its pathway is amino-acid degradation; L-histidine degradation into L-glutamate; N-formimidoyl-L-glutamate from L-histidine: step 3/3. In Xenopus laevis (African clawed frog), this protein is Probable imidazolonepropionase (amdhd1).